We begin with the raw amino-acid sequence, 734 residues long: Ribosomal biogenesis protein LAS1L (734 aa).

The interval 204 to 255 (EGIEEEDQEEDKNIVVDDITEQKPEPQDDGKSTESDVKADGDSKGSEEVDSH) is disordered. Residues 214–255 (DKNIVVDDITEQKPEPQDDGKSTESDVKADGDSKGSEEVDSH) are compositionally biased toward basic and acidic residues. Glycyl lysine isopeptide (Lys-Gly) (interchain with G-Cter in SUMO2) cross-links involve residues Lys-215 and Lys-226. Residues Ser-441, Ser-523, and Ser-560 each carry the phosphoserine modification. Over residues 547-561 (GSEAKAQQQEEQGSV) the composition is skewed to polar residues. Residues 547 to 619 (GSEAKAQQQE…PFSTGQESPT (73 aa)) form a disordered region. Residues 563–575 (DVKEEEKEEKEVL) are compositionally biased toward basic and acidic residues. Acidic residues predominate over residues 578-605 (QVEEEEENDDQEEEEEDEDDEDDEEEDR). Position 617 is a phosphoserine (Ser-617). The tract at residues 636–655 (SAWQVSSEDVRWDTFPLGRM) is interaction with NOL9.

This sequence belongs to the LAS1 family. Component of some MLL1/MLL complex, at least composed of the core components KMT2A/MLL1, ASH2L, HCFC1/HCF1, WDR5 and RBBP5, as well as the facultative components BACC1, CHD8, E2F6, HSP70, INO80C, KANSL1, LAS1L, MAX, MCRS1, MGA, KAT8/MOF, PELP1, PHF20, PRP31, RING2, RUVB1/TIP49A, RUVB2/TIP49B, SENP3, TAF1, TAF4, TAF6, TAF7, TAF9 and TEX10. Component of the 5FMC complex, at least composed of PELP1, LAS1L, TEX10, WDR18 and SENP3; the complex interacts with methylated CHTOP and ZNF148. Interacts with NOL9 to form an ITS2 pre-rRNA endonuclease-kinase complex.

The protein localises to the nucleus. It is found in the nucleolus. The protein resides in the nucleoplasm. It localises to the cytoplasm. In terms of biological role, required for the synthesis of the 60S ribosomal subunit and maturation of the 28S rRNA. Functions as a component of the Five Friends of Methylated CHTOP (5FMC) complex; the 5FMC complex is recruited to ZNF148 by methylated CHTOP, leading to desumoylation of ZNF148 and subsequent transactivation of ZNF148 target genes. Required for the efficient pre-rRNA processing at both ends of internal transcribed spacer 2 (ITS2). The polypeptide is Ribosomal biogenesis protein LAS1L (LAS1L) (Homo sapiens (Human)).